Here is a 605-residue protein sequence, read N- to C-terminus: 9-cis-epoxycarotenoid dioxygenase NCED1, chloroplastic (605 aa).

The N-terminal 16 residues, 1 to 16 (MATTTSHATNTWIKTK), are a transit peptide targeting the chloroplast. Residues 55 to 89 (ILHFPKQSSNYQTPKNNTISHPKQENNNSSSSSTS) are disordered. The span at 60–75 (KQSSNYQTPKNNTISH) shows a compositional bias: polar residues. Positions 80-89 (NNNSSSSSTS) are enriched in low complexity. The Fe cation site is built by His302, His351, His416, and His592.

This sequence belongs to the carotenoid oxygenase family. The cofactor is Fe(2+). Expressed in developing and ripening fruits. Highly expressed in pulp. Observed in unpollinated ovaries (e.g. ovules, placenta and pericarp). Expressed in flowers.

Its subcellular location is the plastid. The protein resides in the chloroplast stroma. It carries out the reaction a 9-cis-epoxycarotenoid + O2 = a 12'-apo-carotenal + 2-cis,4-trans-xanthoxin. It catalyses the reaction 9-cis-violaxanthin + O2 = (3S,5R,6S)-5,6-epoxy-3-hydroxy-5,6-dihydro-12'-apo-beta-caroten-12'-al + 2-cis,4-trans-xanthoxin. The enzyme catalyses 9'-cis-neoxanthin + O2 = (3S,5R,6R)-3,5-dihydroxy-6,7-didehydro-5,6-dihydro-12'-apo-beta-caroten-12'-al + 2-cis,4-trans-xanthoxin. Its pathway is plant hormone biosynthesis; abscisate biosynthesis. Functionally, has a 11,12(11',12') 9-cis epoxycarotenoid cleavage activity. Catalyzes the first step of abscisic-acid (ABA) biosynthesis from carotenoids. Required for ABA accumulation upon drought. Required for ABA-mediated regulation of anther/pollen development, including metabolism, cell wall modification and transcription level. Positive regulator of fruit ripening involved in the biosynthesis of abscisic acid (ABA); initiates ABA biosynthesis at the onset of fruit ripening. Modulates the degree of pigmentation and carotenoid composition as well as pectin catabolism during ripening and may regulate the ethylene production and action in climacteric tomato fruit. This is 9-cis-epoxycarotenoid dioxygenase NCED1, chloroplastic from Solanum lycopersicum (Tomato).